Consider the following 82-residue polypeptide: Small ribosomal subunit protein eS27A (82 aa).

The segment at 37 to 59 (CPGCLNITTVFSHAQTAVTCESC) adopts a C4-type zinc-finger fold. C40 bears the S-methylcysteine mark.

The protein belongs to the eukaryotic ribosomal protein eS27 family. Component of the small ribosomal subunit (SSU). Mature yeast ribosomes consist of a small (40S) and a large (60S) subunit. The 40S small subunit contains 1 molecule of ribosomal RNA (18S rRNA) and 33 different proteins (encoded by 57 genes). The large 60S subunit contains 3 rRNA molecules (25S, 5.8S and 5S rRNA) and 46 different proteins (encoded by 81 genes). Zn(2+) serves as cofactor. In terms of processing, the N-terminus is not modified.

The protein resides in the cytoplasm. In terms of biological role, component of the ribosome, a large ribonucleoprotein complex responsible for the synthesis of proteins in the cell. The small ribosomal subunit (SSU) binds messenger RNAs (mRNAs) and translates the encoded message by selecting cognate aminoacyl-transfer RNA (tRNA) molecules. The large subunit (LSU) contains the ribosomal catalytic site termed the peptidyl transferase center (PTC), which catalyzes the formation of peptide bonds, thereby polymerizing the amino acids delivered by tRNAs into a polypeptide chain. The nascent polypeptides leave the ribosome through a tunnel in the LSU and interact with protein factors that function in enzymatic processing, targeting, and the membrane insertion of nascent chains at the exit of the ribosomal tunnel. The sequence is that of Small ribosomal subunit protein eS27A from Saccharomyces cerevisiae (strain ATCC 204508 / S288c) (Baker's yeast).